The sequence spans 264 residues: 5'-nucleotidase SurE (264 aa).

A divalent metal cation is bound by residues Asp-9, Asp-10, Ser-40, and Asn-95.

Belongs to the SurE nucleotidase family. Requires a divalent metal cation as cofactor.

The protein localises to the cytoplasm. The catalysed reaction is a ribonucleoside 5'-phosphate + H2O = a ribonucleoside + phosphate. Its function is as follows. Nucleotidase that shows phosphatase activity on nucleoside 5'-monophosphates. This chain is 5'-nucleotidase SurE, found in Helicobacter hepaticus (strain ATCC 51449 / 3B1).